Reading from the N-terminus, the 178-residue chain is Interleukin-10 (178 aa).

A signal peptide spans 1–18 (MPGSALLCCLLLLAGVKT). Asn-29 carries an N-linked (GlcNAc...) asparagine glycan. Disulfide bonds link Cys-30–Cys-126 and Cys-80–Cys-132. Asn-134 carries N-linked (GlcNAc...) asparagine glycosylation.

The protein belongs to the IL-10 family. As to quaternary structure, homodimer. Interacts with IL10RA and IL10RB.

The protein resides in the secreted. Major immune regulatory cytokine that acts on many cells of the immune system where it has profound anti-inflammatory functions, limiting excessive tissue disruption caused by inflammation. Mechanistically, IL10 binds to its heterotetrameric receptor comprising IL10RA and IL10RB leading to JAK1 and STAT2-mediated phosphorylation of STAT3. In turn, STAT3 translocates to the nucleus where it drives expression of anti-inflammatory mediators. Targets antigen-presenting cells (APCs) such as macrophages and monocytes and inhibits their release of pro-inflammatory cytokines including granulocyte-macrophage colony-stimulating factor /GM-CSF, granulocyte colony-stimulating factor/G-CSF, IL-1 alpha, IL-1 beta, IL-6, IL-8 and TNF-alpha. Also interferes with antigen presentation by reducing the expression of MHC-class II and co-stimulatory molecules, thereby inhibiting their ability to induce T cell activation. In addition, controls the inflammatory response of macrophages by reprogramming essential metabolic pathways including mTOR signaling. The chain is Interleukin-10 (Il10) from Rattus norvegicus (Rat).